Reading from the N-terminus, the 402-residue chain is NAD-dependent protein deacetylase sirtuin-7 (402 aa).

The interval 1 to 23 (MAAGGGLSRSERKAAERVRRLRE) is disordered. A compositionally biased stretch (basic and acidic residues) spans 9 to 23 (RSERKAAERVRRLRE). The region spanning 83–330 (PEELRRKVRE…QLLMNELGLE (248 aa)) is the Deacetylase sirtuin-type domain. NAD(+) contacts are provided by residues 108–127 (GAGI…NGVW) and 168–171 (QNCD). Catalysis depends on histidine 188, which acts as the Proton acceptor. Zn(2+) is bound by residues cysteine 196, cysteine 199, cysteine 226, and cysteine 229. NAD(+) is bound by residues 269–271 (GSS), 298–300 (NLQ), and cysteine 316. The interval 355-402 (SHSRKSLCRSREEAPPGDQSDPLASAPPILGGWFGRGCAKRAKRKKVA) is disordered. Arginine 390 is modified (asymmetric dimethylarginine; alternate). Arginine 390 bears the Omega-N-methylarginine; alternate mark. The span at 392–402 (CAKRAKRKKVA) shows a compositional bias: basic residues.

The protein belongs to the sirtuin family. Class IV subfamily. Interacts with UBTF and the RNA polymerase I complex. Interacts with components of the B-WICH complex, such as MYBBP1A, SMARCA5/SNF2H and BAZ1B/WSTF. Interacts with ELK4, leading to stabilization at target promoters for H3K18Ac deacetylation. Interacts with histone H2A and/or histone H2B. Interacts with DNMT1. Interacts with SIRT1. The cofactor is Zn(2+). Post-translationally, phosphorylated during mitosis. In terms of processing, methylation at Arg-390 by PRMT6 inhibits the H3K18Ac histone deacetylase activity, promoting mitochondria biogenesis and maintaining mitochondria respiration. Ubiquitinated via 'Lys-63'-linked ubiquitin chains. Deubiquitinated by USP7, inhibiting the H3K18Ac histone deacetylase activity and regulating gluconeogenesis. Ubiquitinated by E3 ubiquitin-protein ligase complex containing FBXO7; leading to proteasomal degradation. In terms of tissue distribution, detected in liver, spleen and testis. Detected in embryos.

It localises to the nucleus. It is found in the nucleolus. Its subcellular location is the nucleoplasm. The protein localises to the chromosome. The protein resides in the cytoplasm. The catalysed reaction is N(6)-acetyl-L-lysyl-[protein] + NAD(+) + H2O = 2''-O-acetyl-ADP-D-ribose + nicotinamide + L-lysyl-[protein]. It carries out the reaction N(6)-glutaryl-L-lysyl-[protein] + NAD(+) + H2O = 2''-O-glutaryl-ADP-D-ribose + nicotinamide + L-lysyl-[protein]. It catalyses the reaction N(6)-succinyl-L-lysyl-[protein] + NAD(+) + H2O = 2''-O-succinyl-ADP-D-ribose + nicotinamide + L-lysyl-[protein]. The enzyme catalyses N(6)-propanoyl-L-lysyl-[protein] + NAD(+) + H2O = 3''-O-propanoyl-ADP-D-ribose + nicotinamide + L-lysyl-[protein]. The catalysed reaction is N(6)-decanoyl-L-lysyl-[protein] + NAD(+) + H2O = 2''-O-decanoyl-ADP-D-ribose + nicotinamide + L-lysyl-[protein]. NAD-dependent protein-lysine deacetylase and deacylase activities are activated by nucleic acids. Histone deacetylase activity is activated by DNA. Protein-lysine deacylase activity is activated by RNA. H3K18Ac histone deacetylase activity is inhibited by methylation at Arg-390. H3K18Ac histone deacetylase activity is inhibited by deubiquitination by USP7. In terms of biological role, NAD-dependent protein-lysine deacylase that can act both as a deacetylase or deacylase (desuccinylase, depropionylase and deglutarylase), depending on the context. Also acts as a dedecanoylase. Specifically mediates deacetylation of histone H3 at 'Lys-18' (H3K18Ac). In contrast to other histone deacetylases, displays strong preference for a specific histone mark, H3K18Ac, directly linked to control of gene expression. H3K18Ac is mainly present around the transcription start site of genes and has been linked to activation of nuclear hormone receptors; SIRT7 thereby acts as a transcription repressor. Moreover, H3K18 hypoacetylation has been reported as a marker of malignancy in various cancers and seems to maintain the transformed phenotype of cancer cells. Also able to mediate deacetylation of histone H3 at 'Lys-36' (H3K36Ac) in the context of nucleosomes. Also mediates deacetylation of non-histone proteins, such as ATM, CDK9, DDX21, DDB1, FBL, FKBP5/FKBP51, GABPB1, RAN, RRP9/U3-55K and POLR1E/PAF53. Enriched in nucleolus where it stimulates transcription activity of the RNA polymerase I complex. Acts by mediating the deacetylation of the RNA polymerase I subunit POLR1E/PAF53, thereby promoting the association of RNA polymerase I with the rDNA promoter region and coding region. In response to metabolic stress, SIRT7 is released from nucleoli leading to hyperacetylation of POLR1E/PAF53 and decreased RNA polymerase I transcription. Required to restore the transcription of ribosomal RNA (rRNA) at the exit from mitosis. Promotes pre-ribosomal RNA (pre-rRNA) cleavage at the 5'-terminal processing site by mediating deacetylation of RRP9/U3-55K, a core subunit of the U3 snoRNP complex. Mediates 'Lys-37' deacetylation of Ran, thereby regulating the nuclear export of NF-kappa-B subunit RELA/p65. Acts as a regulator of DNA damage repair by mediating deacetylation of ATM during the late stages of DNA damage response, promoting ATM dephosphorylation and deactivation. May also deacetylate p53/TP53 and promotes cell survival, however such data need additional confirmation. Suppresses the activity of the DCX (DDB1-CUL4-X-box) E3 ubiquitin-protein ligase complexes by mediating deacetylation of DDB1, which prevents the interaction between DDB1 and CUL4 (CUL4A or CUL4B). Activates RNA polymerase II transcription by mediating deacetylation of CDK9, thereby promoting 'Ser-2' phosphorylation of the C-terminal domain (CTD) of RNA polymerase II. Deacetylates FBL, promoting histone-glutamine methyltransferase activity of FBL. Acts as a regulator of mitochondrial function by catalyzing deacetylation of GABPB1. Regulates Akt/AKT1 activity by mediating deacetylation of FKBP5/FKBP51. Required to prevent R-loop-associated DNA damage and transcription-associated genomic instability by mediating deacetylation and subsequent activation of DDX21, thereby overcoming R-loop-mediated stalling of RNA polymerases. In addition to protein deacetylase activity, also acts as protein-lysine deacylase. Acts as a protein depropionylase by mediating depropionylation of Osterix (SP7), thereby regulating bone formation by osteoblasts. Acts as a histone deglutarylase by mediating deglutarylation of histone H4 on 'Lys-91' (H4K91glu); a mark that destabilizes nucleosomes by promoting dissociation of the H2A-H2B dimers from nucleosomes. Acts as a histone desuccinylase: in response to DNA damage, recruited to DNA double-strand breaks (DSBs) and catalyzes desuccinylation of histone H3 on 'Lys-122' (H3K122succ), thereby promoting chromatin condensation and DSB repair. Also promotes DSB repair by promoting H3K18Ac deacetylation, regulating non-homologous end joining (NHEJ). Along with its role in DNA repair, required for chromosome synapsis during prophase I of female meiosis by catalyzing H3K18Ac deacetylation. Involved in transcriptional repression of LINE-1 retrotransposon via H3K18Ac deacetylation, and promotes their association with the nuclear lamina. Required to stabilize ribosomal DNA (rDNA) heterochromatin and prevent cellular senescence induced by rDNA instability. Acts as a negative regulator of SIRT1 by preventing autodeacetylation of SIRT1, restricting SIRT1 deacetylase activity. This is NAD-dependent protein deacetylase sirtuin-7 from Mus musculus (Mouse).